A 587-amino-acid polypeptide reads, in one-letter code: Prolycopene isomerase 2, chloroplastic (587 aa).

The transit peptide at 1–50 directs the protein to the chloroplast; that stretch reads MLCLSLNSSSTSPPKLPLHHSFSRRGIRSWVRSPCVQRKKLGFWSSPKAV.

This sequence belongs to the carotenoid/retinoid oxidoreductase family. CrtISO subfamily. NAD(+) serves as cofactor. Requires NADP(+) as cofactor. FAD is required as a cofactor. As to expression, up-regulated in the flower buds and flower lip tissue, while it is weakly expressed in leaves.

The protein resides in the plastid. It localises to the chloroplast membrane. The catalysed reaction is 7,7',9,9'-tetra-cis-lycopene = all-trans-lycopene. The protein operates within carotenoid biosynthesis; lycopene biosynthesis. Its function is as follows. Carotene cis-trans-isomerase that converts 7,9,9'-tri-cis-neurosporene to 9'-cis-neurosporene and 7,9,9',7'-tetra-cis-lycopene (also known as prolycopene) into all-trans-lycopene. Isomerization requires redox-active components, suggesting that isomerization is achieved by a reversible redox reaction acting at specific double bonds. Isomerizes adjacent cis-double bonds at C7 and C9 pairwise into the trans-configuration, but is incapable of isomerizing single cis-double bonds at C9 and C9'. This is Prolycopene isomerase 2, chloroplastic (CRTISO2) from Oncidium hybrid cultivar (Orchid).